Consider the following 343-residue polypeptide: UBP1-associated proteins 1A (343 aa).

The segment at 1–61 is disordered; it reads MAKTLDKSKK…SESDNEFDPE (61 aa). The span at 28–49 shows a compositional bias: low complexity; it reads NKQQQQPESSTPYSSSSSSSDS. Over residues 50–61 the composition is skewed to acidic residues; it reads SDSESDNEFDPE. Residues 104-181 enclose the RRM domain; that stretch reads RKIFVYGLPW…RTATCQLASM (78 aa). Residues 312-343 are disordered; that stretch reads STYPDSDAGGKRGTGKDSDAGGSSFHGYSNYS. A compositionally biased stretch (basic and acidic residues) spans 319 to 330; that stretch reads AGGKRGTGKDSD.

In terms of assembly, interacts with UBA1A, UBA2A, UBP1A, UBP1B and UBP1C.

The protein resides in the nucleus. In terms of biological role, acts as a component of a complex regulating the turnover of mRNAs in the nucleus. Binds with high affinity to RNA molecules that contain U-rich sequences in 3'-UTRs. May function in complex with UBP1 and contribute to the stabilization of mRNAs in the nucleus. However, unlike UBP1, UBA1A does not stimulate pre-mRNA splicing. The sequence is that of UBP1-associated proteins 1A (UBA1A) from Arabidopsis thaliana (Mouse-ear cress).